Consider the following 206-residue polypeptide: Small ribosomal subunit protein uS5 (206 aa).

The segment covering 1 to 15 has biased composition (polar residues); it reads MTDTPTKQETQSNKD. A disordered region spans residues 1–50; the sequence is MTDTPTKQETQSNKDNVPGAIPVEQKKNNRNDRKRNRRGDSKNLERDSDW. The span at 38–50 shows a compositional bias: basic and acidic residues; the sequence is RGDSKNLERDSDW. Residues 50–113 enclose the S5 DRBM domain; the sequence is WQERVVQIRR…SDGKKNLVRV (64 aa).

It belongs to the universal ribosomal protein uS5 family. In terms of assembly, part of the 30S ribosomal subunit. Contacts proteins S4 and S8.

With S4 and S12 plays an important role in translational accuracy. Functionally, located at the back of the 30S subunit body where it stabilizes the conformation of the head with respect to the body. The sequence is that of Small ribosomal subunit protein uS5 from Prochlorococcus marinus (strain MIT 9215).